Here is a 281-residue protein sequence, read N- to C-terminus: Bifunctional protein FolD (281 aa).

NADP(+)-binding positions include 159–161 (NRS), Ser184, and Ile225.

This sequence belongs to the tetrahydrofolate dehydrogenase/cyclohydrolase family. As to quaternary structure, homodimer.

The enzyme catalyses (6R)-5,10-methylene-5,6,7,8-tetrahydrofolate + NADP(+) = (6R)-5,10-methenyltetrahydrofolate + NADPH. The catalysed reaction is (6R)-5,10-methenyltetrahydrofolate + H2O = (6R)-10-formyltetrahydrofolate + H(+). The protein operates within one-carbon metabolism; tetrahydrofolate interconversion. In terms of biological role, catalyzes the oxidation of 5,10-methylenetetrahydrofolate to 5,10-methenyltetrahydrofolate and then the hydrolysis of 5,10-methenyltetrahydrofolate to 10-formyltetrahydrofolate. This Thermoplasma volcanium (strain ATCC 51530 / DSM 4299 / JCM 9571 / NBRC 15438 / GSS1) protein is Bifunctional protein FolD.